Here is a 582-residue protein sequence, read N- to C-terminus: Potassium-transporting ATPase potassium-binding subunit (582 aa).

A run of 10 helical transmembrane segments spans residues 11-31 (AVFF…LAWV), 81-101 (LKAV…VLMF), 148-168 (FGIG…MPAF), 195-215 (LLPI…VQTI), 272-292 (VLTL…GAWV), 298-318 (GVAI…VAVV), 379-399 (ALGA…NGVG), 401-421 (GLLN…LMIG), 439-459 (VFVV…AAVV), and 551-571 (GLLI…ALVF).

This sequence belongs to the KdpA family. As to quaternary structure, the system is composed of three essential subunits: KdpA, KdpB and KdpC.

Its subcellular location is the cell membrane. Part of the high-affinity ATP-driven potassium transport (or Kdp) system, which catalyzes the hydrolysis of ATP coupled with the electrogenic transport of potassium into the cytoplasm. This subunit binds the extracellular potassium ions and delivers the ions to the membrane domain of KdpB through an intramembrane tunnel. The chain is Potassium-transporting ATPase potassium-binding subunit from Halobacterium salinarum (strain ATCC 700922 / JCM 11081 / NRC-1) (Halobacterium halobium).